A 389-amino-acid chain; its full sequence is cAMP-dependent protein kinase regulatory subunit (389 aa).

Disordered regions lie at residues 1 to 57 (MSEN…KFAG) and 87 to 110 (SVSAESLNPNPTASSNESWTPPYH). Residues 1–128 (MSENTFPGRL…RLKKSISGNF (128 aa)) form a dimerization and phosphorylation region. Positions 21-31 (AANTEKPSTSH) are enriched in polar residues. The span at 34 to 43 (RVTERDEDKV) shows a compositional bias: basic and acidic residues. The residue at position 87 (Ser87) is a Phosphoserine. A compositionally biased stretch (polar residues) spans 87–105 (SVSAESLNPNPTASSNESW). Residues 129–258 (LFNH…FLEE), Glu207, Arg216, 261–377 (LLST…GVEE), Glu327, and Arg336 contribute to the 3',5'-cyclic AMP site.

The protein belongs to the cAMP-dependent kinase regulatory chain family. As to quaternary structure, tetramer, composed of 2 regulatory (R) and 2 catalytic (C) subunits. In the presence of cAMP it dissociates into 2 active monomeric C subunits and an R dimer.

The protein is cAMP-dependent protein kinase regulatory subunit (pkar) of Blumeria graminis (Powdery mildew).